A 158-amino-acid chain; its full sequence is Crossover junction endodeoxyribonuclease RuvC (158 aa).

Active-site residues include Asp-7, Glu-66, and Asp-139. Residues Asp-7, Glu-66, and Asp-139 each coordinate Mg(2+).

It belongs to the RuvC family. As to quaternary structure, homodimer which binds Holliday junction (HJ) DNA. The HJ becomes 2-fold symmetrical on binding to RuvC with unstacked arms; it has a different conformation from HJ DNA in complex with RuvA. In the full resolvosome a probable DNA-RuvA(4)-RuvB(12)-RuvC(2) complex forms which resolves the HJ. The cofactor is Mg(2+).

It is found in the cytoplasm. It catalyses the reaction Endonucleolytic cleavage at a junction such as a reciprocal single-stranded crossover between two homologous DNA duplexes (Holliday junction).. Functionally, the RuvA-RuvB-RuvC complex processes Holliday junction (HJ) DNA during genetic recombination and DNA repair. Endonuclease that resolves HJ intermediates. Cleaves cruciform DNA by making single-stranded nicks across the HJ at symmetrical positions within the homologous arms, yielding a 5'-phosphate and a 3'-hydroxyl group; requires a central core of homology in the junction. The consensus cleavage sequence is 5'-(A/T)TT(C/G)-3'. Cleavage occurs on the 3'-side of the TT dinucleotide at the point of strand exchange. HJ branch migration catalyzed by RuvA-RuvB allows RuvC to scan DNA until it finds its consensus sequence, where it cleaves and resolves the cruciform DNA. This is Crossover junction endodeoxyribonuclease RuvC from Campylobacter lari (strain RM2100 / D67 / ATCC BAA-1060).